Here is a 134-residue protein sequence, read N- to C-terminus: uncharacterized protein (134 aa).

This is an uncharacterized protein from Swinepox virus (strain Kasza) (SWPV).